Reading from the N-terminus, the 61-residue chain is Large ribosomal subunit protein uL30 (61 aa).

It belongs to the universal ribosomal protein uL30 family. In terms of assembly, part of the 50S ribosomal subunit.

This Colwellia psychrerythraea (strain 34H / ATCC BAA-681) (Vibrio psychroerythus) protein is Large ribosomal subunit protein uL30.